The sequence spans 112 residues: T cell receptor alpha variable 17 (112 aa).

A signal peptide spans 1–21; sequence METLLGVSLVILWLQLARVNS. The Ig-like domain maps to 22-112; sequence QQGEEDPQAL…DTASYFCATD (91 aa). N-linked (GlcNAc...) asparagine glycosylation is found at Asn-38 and Asn-42. A disulfide bridge links Cys-43 with Cys-109.

Alpha-beta TR is a heterodimer composed of an alpha and beta chain; disulfide-linked. The alpha-beta TR is associated with the transmembrane signaling CD3 coreceptor proteins to form the TR-CD3 (TcR or TCR). The assembly of alpha-beta TR heterodimers with CD3 occurs in the endoplasmic reticulum where a single alpha-beta TR heterodimer associates with one CD3D-CD3E heterodimer, one CD3G-CD3E heterodimer and one CD247 homodimer forming a stable octameric structure. CD3D-CD3E and CD3G-CD3E heterodimers preferentially associate with TR alpha and TR beta chains, respectively. The association of the CD247 homodimer is the last step of TcR assembly in the endoplasmic reticulum and is required for transport to the cell surface.

The protein resides in the cell membrane. Its function is as follows. V region of the variable domain of T cell receptor (TR) alpha chain that participates in the antigen recognition. Alpha-beta T cell receptors are antigen specific receptors which are essential to the immune response and are present on the cell surface of T lymphocytes. Recognize peptide-major histocompatibility (MH) (pMH) complexes that are displayed by antigen presenting cells (APC), a prerequisite for efficient T cell adaptive immunity against pathogens. Binding of alpha-beta TR to pMH complex initiates TR-CD3 clustering on the cell surface and intracellular activation of LCK that phosphorylates the ITAM motifs of CD3G, CD3D, CD3E and CD247 enabling the recruitment of ZAP70. In turn ZAP70 phosphorylates LAT, which recruits numerous signaling molecules to form the LAT signalosome. The LAT signalosome propagates signal branching to three major signaling pathways, the calcium, the mitogen-activated protein kinase (MAPK) kinase and the nuclear factor NF-kappa-B (NF-kB) pathways, leading to the mobilization of transcription factors that are critical for gene expression and essential for T cell growth and differentiation. The T cell repertoire is generated in the thymus, by V-(D)-J rearrangement. This repertoire is then shaped by intrathymic selection events to generate a peripheral T cell pool of self-MH restricted, non-autoaggressive T cells. Post-thymic interaction of alpha-beta TR with the pMH complexes shapes TR structural and functional avidity. The protein is T cell receptor alpha variable 17 of Homo sapiens (Human).